The chain runs to 332 residues: Isopentenyl phosphate kinase (332 aa).

Position 1 is an N-acetylmethionine (M1). ATP is bound at residue 18–22; it reads KLGGA. A substrate-binding site is contributed by A96. G97 contacts ATP. 2 residues coordinate substrate: H101 and G202. ATP is bound by residues D223, 228–233, G279, and K283; that span reads YDRPPS.

The protein belongs to the isopentenyl phosphate kinase family.

The protein localises to the cytoplasm. Its subcellular location is the cytosol. It carries out the reaction isopentenyl phosphate + ATP = isopentenyl diphosphate + ADP. Catalyzes the formation of isopentenyl diphosphate (IPP), the universal five-carbon isoprenoid building block of all natural isoprenoids. Acts in parallel with the mevalonate (MVA) pathway and plays an important role in regulating the formation of both MVA and methylerythritol phosphate (MEP) pathway-derived terpenoid compounds by controlling the ratio of isopentenyl phosphate (IP) and dimethylallyl phosphate (DMAP) to isopentenyl diphosphate (IPP) and dimethylallyl diphosphate (DMAPP). Controls the levels of IP and DMAP that are competitive inhibitors of the farnesyl diphosphate synthase. Regulates the production of farnesyl diphosphate-derived terpenoids in the cytosol, and geranyl diphosphate-derived compounds in plastids. This chain is Isopentenyl phosphate kinase, found in Arabidopsis thaliana (Mouse-ear cress).